Here is a 301-residue protein sequence, read N- to C-terminus: Phosphatidylserine decarboxylase proenzyme (301 aa).

Active-site charge relay system; for autoendoproteolytic cleavage activity residues include Asp117, His173, and Ser260. The Schiff-base intermediate with substrate; via pyruvic acid; for decarboxylase activity role is filled by Ser260. A Pyruvic acid (Ser); by autocatalysis modification is found at Ser260.

This sequence belongs to the phosphatidylserine decarboxylase family. PSD-B subfamily. Prokaryotic type II sub-subfamily. Heterodimer of a large membrane-associated beta subunit and a small pyruvoyl-containing alpha subunit. The cofactor is pyruvate. Post-translationally, is synthesized initially as an inactive proenzyme. Formation of the active enzyme involves a self-maturation process in which the active site pyruvoyl group is generated from an internal serine residue via an autocatalytic post-translational modification. Two non-identical subunits are generated from the proenzyme in this reaction, and the pyruvate is formed at the N-terminus of the alpha chain, which is derived from the carboxyl end of the proenzyme. The autoendoproteolytic cleavage occurs by a canonical serine protease mechanism, in which the side chain hydroxyl group of the serine supplies its oxygen atom to form the C-terminus of the beta chain, while the remainder of the serine residue undergoes an oxidative deamination to produce ammonia and the pyruvoyl prosthetic group on the alpha chain. During this reaction, the Ser that is part of the protease active site of the proenzyme becomes the pyruvoyl prosthetic group, which constitutes an essential element of the active site of the mature decarboxylase.

The protein localises to the cell membrane. The catalysed reaction is a 1,2-diacyl-sn-glycero-3-phospho-L-serine + H(+) = a 1,2-diacyl-sn-glycero-3-phosphoethanolamine + CO2. Its pathway is phospholipid metabolism; phosphatidylethanolamine biosynthesis; phosphatidylethanolamine from CDP-diacylglycerol: step 2/2. Its function is as follows. Catalyzes the formation of phosphatidylethanolamine (PtdEtn) from phosphatidylserine (PtdSer). This chain is Phosphatidylserine decarboxylase proenzyme, found in Chlamydia trachomatis serovar L2b (strain UCH-1/proctitis).